Reading from the N-terminus, the 230-residue chain is NEDD8-conjugating enzyme Ubc12 (230 aa).

Residues 1 to 87 are disordered; the sequence is MFRLKELQKK…AELRAQKDID (87 aa). The span at 10-20 shows a compositional bias: low complexity; it reads KQQQQQQQQQQ. The segment covering 26-36 has biased composition (polar residues); it reads TNGTDAVTTEP. A compositionally biased stretch (basic and acidic residues) spans 37–57; it reads TDVKRQNSNDLKEIRKQKSKD. The segment covering 61-70 has biased composition (polar residues); it reads SLKTKQSSES. The UBC core domain occupies 77 to 221; it reads PAELRAQKDI…VRQSLRGGYI (145 aa). Cys159 (glycyl thioester intermediate) is an active-site residue.

It belongs to the ubiquitin-conjugating enzyme family. UBC12 subfamily.

The enzyme catalyses [E1 NEDD8-activating enzyme]-S-[NEDD8 protein]-yl-L-cysteine + [E2 NEDD8-conjugating enzyme]-L-cysteine = [E1 NEDD8-activating enzyme]-L-cysteine + [E2 NEDD8-conjugating enzyme]-S-[NEDD8-protein]-yl-L-cysteine.. It functions in the pathway protein modification; protein neddylation. Functionally, accepts the ubiquitin-like protein nedd8 from the uba3-nae1 E1 complex and catalyzes its covalent attachment to other proteins. In Dictyostelium discoideum (Social amoeba), this protein is NEDD8-conjugating enzyme Ubc12 (ube2m).